Consider the following 342-residue polypeptide: MVNSNFYRNLGPRKLMAIADFLQDFIEAPKIHEDVAIHDIKILQEASSNDISFLSNIKYSRFLKNTKAAACIVPKDFTGEVNPNTVLLRAENSYFAYGKLIDFFYAPVKSYPAKIMKSAYVAESATIGKNCYVGHNAVIEDNVVIGDDSIIEAGSFIGTGVVIGRNARIESNVSINYSVIGDDVVILSGAKIGQDGFGFSTEKGMHHKIFHTGIVKIGNNVEIGANTTIDRGSLQDTIIEDLCRIDNLVQIGHSVKIGKGSIIVAQAGIAGSSVIGKYCALGGQVGVAGHLYIGDGAQVAAQGGVAQNIEAGKIVGGSPAVPIMDWHRQSIIMKQLINKRSK.

Histidine 253 serves as the catalytic Proton acceptor.

Belongs to the transferase hexapeptide repeat family. LpxD subfamily. In terms of assembly, homotrimer.

It carries out the reaction a UDP-3-O-[(3R)-3-hydroxyacyl]-alpha-D-glucosamine + a (3R)-hydroxyacyl-[ACP] = a UDP-2-N,3-O-bis[(3R)-3-hydroxyacyl]-alpha-D-glucosamine + holo-[ACP] + H(+). It functions in the pathway bacterial outer membrane biogenesis; LPS lipid A biosynthesis. Its function is as follows. Catalyzes the N-acylation of UDP-3-O-acylglucosamine using 3-hydroxyacyl-ACP as the acyl donor. Is involved in the biosynthesis of lipid A, a phosphorylated glycolipid that anchors the lipopolysaccharide to the outer membrane of the cell. This is UDP-3-O-acylglucosamine N-acyltransferase from Rickettsia bellii (strain RML369-C).